A 122-amino-acid chain; its full sequence is Large ribosomal subunit protein uL14 (122 aa).

The protein belongs to the universal ribosomal protein uL14 family. Part of the 50S ribosomal subunit. Forms a cluster with proteins L3 and L19. In the 70S ribosome, L14 and L19 interact and together make contacts with the 16S rRNA in bridges B5 and B8.

Binds to 23S rRNA. Forms part of two intersubunit bridges in the 70S ribosome. This Alcanivorax borkumensis (strain ATCC 700651 / DSM 11573 / NCIMB 13689 / SK2) protein is Large ribosomal subunit protein uL14.